A 154-amino-acid chain; its full sequence is Telokin (154 aa).

A disordered region spans residues 1–24; it reads ISGMSGRKASGSSPTSPINANKVE. The span at 10 to 19 shows a compositional bias: polar residues; that stretch reads SGSSPTSPIN. The Ig-like C2-type domain occupies 42–133; the sequence is PYFTKTILDM…ATCTAELLVE (92 aa). Positions 134–154 are disordered; that stretch reads TMGKEGEGEGEGEEDEEEEEE. Residues 141-154 show a composition bias toward acidic residues; that stretch reads GEGEGEEDEEEEEE.

Belongs to the protein kinase superfamily. CAMK Ser/Thr protein kinase family. As to quaternary structure, binds calmodulin.

Corresponds to the C-terminus of smooth muscle myosin light chain kinase. The protein is Telokin of Meleagris gallopavo (Wild turkey).